Reading from the N-terminus, the 390-residue chain is Flap endonuclease 1-2 (390 aa).

Residues 1-108 (MGIHQLMQFL…GELARRKKLK (108 aa)) are N-domain. Position 34 (aspartate 34) interacts with Mg(2+). Arginine 74 provides a ligand contact to DNA. Mg(2+) contacts are provided by aspartate 90, glutamate 162, glutamate 164, aspartate 183, and aspartate 185. The segment at 126-254 (QALLQNQRTT…GTAYKLIKEY (129 aa)) is I-domain. Glutamate 162 contributes to the DNA binding site. Residues glycine 232 and aspartate 234 each coordinate DNA. Residue aspartate 234 participates in Mg(2+) binding. The segment at 348–356 (FQSRLENFF) is interaction with PCNA. The segment at 359–390 (TTKIIHPNNSKAKAKSNKKTEQPQKSGGKKKI) is disordered.

This sequence belongs to the XPG/RAD2 endonuclease family. FEN1 subfamily. As to quaternary structure, interacts with PCNA. Three molecules of FEN1 bind to one PCNA trimer with each molecule binding to one PCNA monomer. PCNA stimulates the nuclease activity without altering cleavage specificity. Mg(2+) is required as a cofactor. Post-translationally, phosphorylated. Phosphorylation upon DNA damage induces relocalization to the nuclear plasma.

The protein localises to the nucleus. It is found in the nucleolus. The protein resides in the nucleoplasm. It localises to the mitochondrion. Structure-specific nuclease with 5'-flap endonuclease and 5'-3' exonuclease activities involved in DNA replication and repair. During DNA replication, cleaves the 5'-overhanging flap structure that is generated by displacement synthesis when DNA polymerase encounters the 5'-end of a downstream Okazaki fragment. It enters the flap from the 5'-end and then tracks to cleave the flap base, leaving a nick for ligation. Also involved in the long patch base excision repair (LP-BER) pathway, by cleaving within the apurinic/apyrimidinic (AP) site-terminated flap. Acts as a genome stabilization factor that prevents flaps from equilibrating into structures that lead to duplications and deletions. Also possesses 5'-3' exonuclease activity on nicked or gapped double-stranded DNA, and exhibits RNase H activity. Also involved in replication and repair of rDNA and in repairing mitochondrial DNA. The chain is Flap endonuclease 1-2 from Paramecium tetraurelia.